Consider the following 211-residue polypeptide: Large ribosomal subunit protein eL13 (211 aa).

The residue at position 16 (Lys-16) is an N6-acetyllysine. Ser-52, Ser-77, and Ser-106 each carry phosphoserine. Residues Lys-123 and Lys-145 each participate in a glycyl lysine isopeptide (Lys-Gly) (interchain with G-Cter in SUMO2) cross-link. Lys-174 is covalently cross-linked (Glycyl lysine isopeptide (Lys-Gly) (interchain with G-Cter in SUMO1); alternate). Glycyl lysine isopeptide (Lys-Gly) (interchain with G-Cter in SUMO2); alternate cross-links involve residues Lys-174 and Lys-177. An N6-acetyllysine; alternate modification is found at Lys-177.

It belongs to the eukaryotic ribosomal protein eL13 family. In terms of assembly, component of the 60S large ribosomal subunit (LSU).

It is found in the cytoplasm. Component of the ribosome, a large ribonucleoprotein complex responsible for the synthesis of proteins in the cell. The small ribosomal subunit (SSU) binds messenger RNAs (mRNAs) and translates the encoded message by selecting cognate aminoacyl-transfer RNA (tRNA) molecules. The large subunit (LSU) contains the ribosomal catalytic site termed the peptidyl transferase center (PTC), which catalyzes the formation of peptide bonds, thereby polymerizing the amino acids delivered by tRNAs into a polypeptide chain. The nascent polypeptides leave the ribosome through a tunnel in the LSU and interact with protein factors that function in enzymatic processing, targeting, and the membrane insertion of nascent chains at the exit of the ribosomal tunnel. As part of the LSU, it is probably required for its formation and the maturation of rRNAs. Plays a role in bone development. This Cricetulus griseus (Chinese hamster) protein is Large ribosomal subunit protein eL13 (RPL13).